A 187-amino-acid polypeptide reads, in one-letter code: Probable carboxylesterase Culp7 (187 aa).

A disulfide bridge connects residues C15 and C69. Residue S80 is the Nucleophile of the active site. Cysteines 151 and 158 form a disulfide. Residue D155 is part of the active site. Residue H167 is the Proton donor/acceptor of the active site.

This sequence belongs to the cutinase family.

The protein localises to the cytoplasm. Its subcellular location is the cell membrane. It is found in the secreted. The protein resides in the cell wall. Its function is as follows. May have a role in cell wall processes. Does not exhibit cutinase activity. This Mycobacterium tuberculosis (strain ATCC 25618 / H37Rv) protein is Probable carboxylesterase Culp7.